A 125-amino-acid chain; its full sequence is uncharacterized protein (125 aa).

2 helical membrane passes run 22–44 and 54–73; these read TPLMVLIFFMVIDYLGDIVNAAV and YMGIAKIVSVLVVIIVSVLM.

The protein belongs to the bacteriophage holin family. Cp-1 holin subfamily.

The protein localises to the cell membrane. This is an uncharacterized protein from Clostridium acetobutylicum (strain ATCC 824 / DSM 792 / JCM 1419 / IAM 19013 / LMG 5710 / NBRC 13948 / NRRL B-527 / VKM B-1787 / 2291 / W).